A 338-amino-acid chain; its full sequence is Limbic system-associated membrane protein (338 aa).

Positions 1-28 (MVARAQPDRKQLPLVLLRLLCLLPTGLP) are cleaved as a signal peptide. 3 Ig-like C2-type domains span residues 29-122 (VRSV…PKTS), 132-214 (PKIS…VRVT), and 219-306 (PTIT…LYLY). Asn40, Asn66, Asn136, and Asn148 each carry an N-linked (GlcNAc...) asparagine glycan. Cys53 and Cys111 are disulfide-bonded. Cystine bridges form between Cys153–Cys197 and Cys239–Cys290. Asn279, Asn287, Asn300, and Asn315 each carry an N-linked (GlcNAc...) asparagine glycan. Asn315 is lipidated: GPI-anchor amidated asparagine. Positions 316–338 (GSVSLAVPLWLLAASLLCLLSKC) are cleaved as a propeptide — removed in mature form.

This sequence belongs to the immunoglobulin superfamily. IgLON family.

Its subcellular location is the cell membrane. Mediates selective neuronal growth and axon targeting. Probably serves as a recognition molecule for the formation of limbic connections. The polypeptide is Limbic system-associated membrane protein (Gallus gallus (Chicken)).